The following is a 387-amino-acid chain: GTP-binding protein 10 (387 aa).

In terms of domain architecture, Obg spans 13–148; the sequence is GNFIDNLRLF…RVIHLDLKLI (136 aa). Residues 149-344 enclose the OBG-type G domain; sequence ADIGLVGFPN…LKNCIRKSLD (196 aa). GTP-binding positions include 155–162, 202–206, and 278–281; these read GFPNAGKS, DLPGL, and NKMD.

It belongs to the TRAFAC class OBG-HflX-like GTPase superfamily. OBG GTPase family.

It is found in the nucleus. Its subcellular location is the nucleolus. Its function is as follows. May be involved in the ribosome maturation process. This is GTP-binding protein 10 (GTPBP10) from Bos taurus (Bovine).